A 74-amino-acid polypeptide reads, in one-letter code: uncharacterized protein (74 aa).

This is an uncharacterized protein from Dictyostelium discoideum (Social amoeba).